The chain runs to 613 residues: Leucine-rich repeat receptor-like protein FASCIATED EAR2 (613 aa).

An N-terminal signal peptide occupies residues Met-1–Pro-28. At Ala-29–Gly-573 the chain is on the extracellular side. LRR repeat units follow at residues Thr-79–Leu-103, Leu-104–Ser-128, Leu-130–Ser-150, Leu-151–Ala-176, Leu-178–Asp-199, Asn-202–Val-226, Arg-227–Leu-250, Thr-251–Cys-274, Gln-276–Ala-297, Leu-298–Cys-322, Ser-324–Trp-346, Leu-347–Phe-370, Leu-372–Val-394, Val-435–Met-459, Lys-460–Met-483, Gly-484–Met-507, and Thr-508–Gly-531. N-linked (GlcNAc...) asparagine glycosylation occurs at Asn-91. Asn-158 carries an N-linked (GlcNAc...) asparagine glycan. Asn-249 is a glycosylation site (N-linked (GlcNAc...) asparagine). The N-linked (GlcNAc...) asparagine glycan is linked to Asn-393. N-linked (GlcNAc...) asparagine glycosylation is present at Asn-466. N-linked (GlcNAc...) asparagine glycosylation is present at Asn-514. A helical membrane pass occupies residues Trp-574 to Cys-597. Topologically, residues Ser-598–Tyr-613 are cytoplasmic.

As to expression, expressed in ear primordia, vegetative apex and young leaf tissues. Barely detected in expanded leaf tissues and not expressed in roots.

It localises to the cell membrane. Functionally, receptor-like protein that regulates shoot meristem proliferation. Based on additive and synergistic phenotypes of double mutants, it is probable that unlike CLV1 and CLV2 in A.thaliana, FAE2 and TD1 do not function exclusively in a single pathway. This is Leucine-rich repeat receptor-like protein FASCIATED EAR2 (FEA2) from Zea mays (Maize).